The primary structure comprises 218 residues: Oxygen regulatory protein NreC (218 aa).

Positions 2–119 (KIVIADDHAV…QLILAVRTVY (118 aa)) constitute a Response regulatory domain. Asp-53 bears the 4-aspartylphosphate mark. Residues 149 to 214 (SSDPFKILSK…ELVEYALKKK (66 aa)) form the HTH luxR-type domain. Residues 173–192 (NKDIAEKLFVSVKTVEAHKT) constitute a DNA-binding region (H-T-H motif).

Phosphorylated by NreB.

The protein localises to the cytoplasm. In terms of biological role, member of the two-component regulatory system NreB/NreC involved in the control of dissimilatory nitrate/nitrite reduction in response to oxygen. Phosphorylated NreC binds to a GC-rich palindromic sequence at the promoters of the nitrate (narGHJI) and nitrite (nir) reductase operons, as well as the putative nitrate transporter gene narT, and activates their expression. The protein is Oxygen regulatory protein NreC (nreC) of Staphylococcus epidermidis (strain ATCC 35984 / DSM 28319 / BCRC 17069 / CCUG 31568 / BM 3577 / RP62A).